The primary structure comprises 411 residues: Imidazolonepropionase (411 aa).

Positions 78 and 80 each coordinate Fe(3+). Positions 78 and 80 each coordinate Zn(2+). The 4-imidazolone-5-propanoate site is built by Arg87, Tyr150, and His183. Tyr150 is a binding site for N-formimidoyl-L-glutamate. His248 contributes to the Fe(3+) binding site. His248 provides a ligand contact to Zn(2+). 4-imidazolone-5-propanoate is bound at residue Gln251. Fe(3+) is bound at residue Asp322. Asp322 contacts Zn(2+). The N-formimidoyl-L-glutamate site is built by Asn324 and Gly326. Thr327 serves as a coordination point for 4-imidazolone-5-propanoate.

This sequence belongs to the metallo-dependent hydrolases superfamily. HutI family. Zn(2+) is required as a cofactor. Requires Fe(3+) as cofactor.

It is found in the cytoplasm. The enzyme catalyses 4-imidazolone-5-propanoate + H2O = N-formimidoyl-L-glutamate. It functions in the pathway amino-acid degradation; L-histidine degradation into L-glutamate; N-formimidoyl-L-glutamate from L-histidine: step 3/3. Functionally, catalyzes the hydrolytic cleavage of the carbon-nitrogen bond in imidazolone-5-propanoate to yield N-formimidoyl-L-glutamate. It is the third step in the universal histidine degradation pathway. This is Imidazolonepropionase from Flavobacterium psychrophilum (strain ATCC 49511 / DSM 21280 / CIP 103535 / JIP02/86).